We begin with the raw amino-acid sequence, 109 residues long: Small ribosomal subunit protein uS17 (109 aa).

It belongs to the universal ribosomal protein uS17 family. As to quaternary structure, part of the 30S ribosomal subunit.

Its function is as follows. One of the primary rRNA binding proteins, it binds specifically to the 5'-end of 16S ribosomal RNA. This chain is Small ribosomal subunit protein uS17, found in Methanococcus maripaludis (strain DSM 14266 / JCM 13030 / NBRC 101832 / S2 / LL).